A 147-amino-acid chain; its full sequence is uncharacterized protein (147 aa).

Positions 44 to 147 constitute an HTH LytTR-type domain; that stretch reads LVGYIDKEIH…LKSIKERLSI (104 aa).

The protein resides in the cytoplasm. This is an uncharacterized protein from Staphylococcus aureus (strain MW2).